The following is a 54-amino-acid chain: Defensin-like protein (54 aa).

At Q1 the chain carries Pyrrolidone carboxylic acid. Cystine bridges form between C4–C52, C16–C37, C22–C47, and C26–C49.

It belongs to the DEFL family. As to quaternary structure, monomer.

The protein localises to the secreted. Its function is as follows. Taste-modifying protein; sweet-tasting. It is 2000 sweeter than sucrose on a molar basis. Functionally, has a pH-specific antimicrobial activity against bacteria (B.subtilis, E.coli and S.aureus) and the fungus C.albicans. The sequence is that of Defensin-like protein from Pentadiplandra brazzeana.